The sequence spans 155 residues: Protein-export protein SecB (155 aa).

It belongs to the SecB family. In terms of assembly, homotetramer, a dimer of dimers. One homotetramer interacts with 1 SecA dimer.

The protein resides in the cytoplasm. One of the proteins required for the normal export of preproteins out of the cell cytoplasm. It is a molecular chaperone that binds to a subset of precursor proteins, maintaining them in a translocation-competent state. It also specifically binds to its receptor SecA. The protein is Protein-export protein SecB of Escherichia coli O139:H28 (strain E24377A / ETEC).